A 129-amino-acid chain; its full sequence is Glycine cleavage system H protein (129 aa).

The Lipoyl-binding domain occupies 24-106; that stretch reads IAVIGITAYA…YGDGWLIKVR (83 aa). Residue lysine 65 is modified to N6-lipoyllysine.

This sequence belongs to the GcvH family. In terms of assembly, the glycine cleavage system is composed of four proteins: P, T, L and H. The cofactor is (R)-lipoate.

In terms of biological role, the glycine cleavage system catalyzes the degradation of glycine. The H protein shuttles the methylamine group of glycine from the P protein to the T protein. The polypeptide is Glycine cleavage system H protein (Synechococcus sp. (strain JA-2-3B'a(2-13)) (Cyanobacteria bacterium Yellowstone B-Prime)).